Reading from the N-terminus, the 408-residue chain is Serine/threonine-protein kinase UCNL (408 aa).

Residues 21–341 (IKALKILGKG…AAEIKELAFF (321 aa)) form the Protein kinase domain. Residues 27-35 (LGKGATGTV) and Lys-54 contribute to the ATP site. Asp-152 functions as the Proton acceptor in the catalytic mechanism. The AGC-kinase C-terminal domain maps to 342–408 (AGVRWDLLTE…CRKNDPFIEF (67 aa)).

The protein belongs to the protein kinase superfamily. AGC Ser/Thr protein kinase family. Expressed in the epidermis and cortex of the transition zone of the root apex. Expressed in rosette leaves, stems, flowers and siliques.

Its subcellular location is the cytoplasm. It localises to the nucleus. It catalyses the reaction L-seryl-[protein] + ATP = O-phospho-L-seryl-[protein] + ADP + H(+). It carries out the reaction L-threonyl-[protein] + ATP = O-phospho-L-threonyl-[protein] + ADP + H(+). Regulates planar ovule integument development. The protein is Serine/threonine-protein kinase UCNL of Arabidopsis thaliana (Mouse-ear cress).